The sequence spans 493 residues: ATP-dependent rRNA helicase RRP3 (493 aa).

Composition is skewed to basic and acidic residues over residues 26 to 42 and 51 to 62; these read ALEN…KDSE and ERPAKKQAKDEK. Residues 26–68 are disordered; it reads ALENQKKMQAASRKDSESDSSDEEVERPAKKQAKDEKVEEPEE. Residues 73 to 101 carry the Q motif motif; that stretch reads ESFAQLNLVPELIQACQNLNFTKPTPIQA. Residues 104 to 276 form the Helicase ATP-binding domain; sequence IPPALAGSDV…RASLTNPVKC (173 aa). Position 117 to 124 (117 to 124) interacts with ATP; the sequence is AQTGSGKT. The DEAD box signature appears at 223-226; sequence DEAD. In terms of domain architecture, Helicase C-terminal spans 307–453; that stretch reads LLNEFIGKTV…NIILTLRDSV (147 aa). The disordered stretch occupies residues 467 to 493; the sequence is RNKEKQARGKGRRGRMMAKENMDREEK. The segment covering 483 to 493 has biased composition (basic and acidic residues); that stretch reads MAKENMDREEK.

It belongs to the DEAD box helicase family. DDX47/RRP3 subfamily. In terms of assembly, interacts with the SSU processome.

It is found in the nucleus. It catalyses the reaction ATP + H2O = ADP + phosphate + H(+). Functionally, ATP-dependent rRNA helicase required for pre-ribosomal RNA processing. Involved in the maturation of the 35S-pre-rRNA and to its cleavage to mature 18S rRNA. This is ATP-dependent rRNA helicase RRP3 from Candida glabrata (strain ATCC 2001 / BCRC 20586 / JCM 3761 / NBRC 0622 / NRRL Y-65 / CBS 138) (Yeast).